Reading from the N-terminus, the 206-residue chain is uncharacterized protein (206 aa).

The disordered stretch occupies residues 128–206 (KRYNVQKPKV…DQSWLDELLR (79 aa)). Residues 171 to 181 (YISSNHSSMHI) show a composition bias toward polar residues.

The protein localises to the cytoplasm. Its subcellular location is the nucleus. This is an uncharacterized protein from Schizosaccharomyces pombe (strain 972 / ATCC 24843) (Fission yeast).